We begin with the raw amino-acid sequence, 303 residues long: MKVIFMGTPEFAVPTLKKLIIHHEVKAVFTQQPKAKGRGLHLAKSPIHQLAFEHQIPVYSPSTLRNDETINLIKKIDADIIVVIAYGFIVPKAILEAKKYGCLNIHPSDLPRHRGAAPLQRTIIEGDRKSSVCIMRMDSGLDTGDILLKEDLNLERRITLDELSNKCAHLGAELLIKTLANIDNIVPIKQSSNGITYAHKLTKAEGKINWYESAYSIDCKIRGMNPWPGAYFSYNDKIIKILRAEYFNYNHHFIPGTVINNKLEIACGSGILRVKKLQQESKKALNIEEFLRGTNILKDTILK.

108-111 (SDLP) lines the (6S)-5,6,7,8-tetrahydrofolate pocket.

Belongs to the Fmt family.

The enzyme catalyses L-methionyl-tRNA(fMet) + (6R)-10-formyltetrahydrofolate = N-formyl-L-methionyl-tRNA(fMet) + (6S)-5,6,7,8-tetrahydrofolate + H(+). In terms of biological role, attaches a formyl group to the free amino group of methionyl-tRNA(fMet). The formyl group appears to play a dual role in the initiator identity of N-formylmethionyl-tRNA by promoting its recognition by IF2 and preventing the misappropriation of this tRNA by the elongation apparatus. The polypeptide is Methionyl-tRNA formyltransferase (Rickettsia prowazekii (strain Madrid E)).